Here is a 290-residue protein sequence, read N- to C-terminus: Nucleotide-binding protein Bpet0443 (290 aa).

Gly9–Ser16 lines the ATP pocket. Asp58–Ser61 serves as a coordination point for GTP.

This sequence belongs to the RapZ-like family.

Displays ATPase and GTPase activities. The protein is Nucleotide-binding protein Bpet0443 of Bordetella petrii (strain ATCC BAA-461 / DSM 12804 / CCUG 43448).